The chain runs to 277 residues: F420-dependent methylenetetrahydromethanopterin dehydrogenase (277 aa).

Belongs to the MTD family.

It catalyses the reaction 5,10-methylenetetrahydromethanopterin + oxidized coenzyme F420-(gamma-L-Glu)(n) + 2 H(+) = 5,10-methenyl-5,6,7,8-tetrahydromethanopterin + reduced coenzyme F420-(gamma-L-Glu)(n). It functions in the pathway one-carbon metabolism; methanogenesis from CO(2); 5,10-methylene-5,6,7,8-tetrahydromethanopterin from 5,10-methenyl-5,6,7,8-tetrahydromethanopterin (coenzyme F420 route): step 1/1. In terms of biological role, catalyzes the reversible reduction of methenyl-H(4)MPT(+) to methylene-H(4)MPT. The chain is F420-dependent methylenetetrahydromethanopterin dehydrogenase from Methanococcus maripaludis (strain C5 / ATCC BAA-1333).